The chain runs to 389 residues: Chalcone synthase 3 (389 aa).

Cys-164 is an active-site residue.

This sequence belongs to the thiolase-like superfamily. Chalcone/stilbene synthases family.

The catalysed reaction is (E)-4-coumaroyl-CoA + 3 malonyl-CoA + 3 H(+) = 2',4,4',6'-tetrahydroxychalcone + 3 CO2 + 4 CoA. Its pathway is secondary metabolite biosynthesis; flavonoid biosynthesis. Functionally, the primary product of this enzyme is 4,2',4',6'-tetrahydroxychalcone (also termed naringenin-chalcone or chalcone) which can under specific conditions spontaneously isomerize into naringenin. In Pisum sativum (Garden pea), this protein is Chalcone synthase 3 (CHS3).